The chain runs to 146 residues: 3-hydroxyacyl-[acyl-carrier-protein] dehydratase FabZ (146 aa).

H48 is a catalytic residue.

The protein belongs to the thioester dehydratase family. FabZ subfamily.

It is found in the cytoplasm. It catalyses the reaction a (3R)-hydroxyacyl-[ACP] = a (2E)-enoyl-[ACP] + H2O. In terms of biological role, involved in unsaturated fatty acids biosynthesis. Catalyzes the dehydration of short chain beta-hydroxyacyl-ACPs and long chain saturated and unsaturated beta-hydroxyacyl-ACPs. In Acetivibrio thermocellus (strain ATCC 27405 / DSM 1237 / JCM 9322 / NBRC 103400 / NCIMB 10682 / NRRL B-4536 / VPI 7372) (Clostridium thermocellum), this protein is 3-hydroxyacyl-[acyl-carrier-protein] dehydratase FabZ.